An 802-amino-acid chain; its full sequence is Copper-exporting P-type ATPase (802 aa).

HMA domains lie at 5 to 70 (KKTT…YGVT) and 72 to 138 (ETVE…YDAS). Cu(+)-binding residues include Cys-16, Cys-19, Cys-83, and Cys-86. 6 consecutive transmembrane segments (helical) span residues 161-181 (LIIS…HLFN), 192-212 (WFQF…FYVG), 224-244 (MDVL…YEMV), 256-276 (LYFE…YLEA), 411-431 (YFVP…ITLV), and 438-458 (PALV…LGLA). Asp-495 (4-aspartylphosphate intermediate) is an active-site residue. Residues Asp-690 and Asp-694 each coordinate Mg(2+). The next 2 helical transmembrane spans lie at 748 to 767 (LFWA…LGLL) and 771 to 790 (VAGA…ALRL).

Belongs to the cation transport ATPase (P-type) (TC 3.A.3) family. Type IB subfamily.

The protein localises to the cell membrane. The enzyme catalyses Cu(+)(in) + ATP + H2O = Cu(+)(out) + ADP + phosphate + H(+). Functionally, involved in copper export. The protein is Copper-exporting P-type ATPase (copA) of Staphylococcus aureus (strain N315).